The sequence spans 294 residues: MRFVIVTGLSGAGKTQATRTLEDLGYFCVDNLPPKLISKFAEVCTQSGGNIEKVALVIDIRGGIFFDDFFEALNYLKKNEFKYEILFLEATDEVLIKRFKETRRSHPLSPDGRVLTGITQEREKLREVKNIADIIIDTSKYEIRHLREKINKNYGDHTYPEKQLSITVLSFGFKYGIPVDSDLVFDVRFIPNPFYIPELKQYSGNDEPVKDYVLKQEETVNFIEKLVDMLRYLIPNYIKEGKSQLIISIGCTGGRHRSVAIANEVYERLNKENYNSKIEHRDVAEDLHKGEKKL.

Position 8–15 (8–15) interacts with ATP; the sequence is GLSGAGKT. Position 59 to 62 (59 to 62) interacts with GTP; the sequence is DIRG.

The protein belongs to the RapZ-like family.

Displays ATPase and GTPase activities. This Clostridium beijerinckii (strain ATCC 51743 / NCIMB 8052) (Clostridium acetobutylicum) protein is Nucleotide-binding protein Cbei_4857.